The sequence spans 529 residues: Bifunctional purine biosynthesis protein PurH (529 aa).

The MGS-like domain maps to Met-1–Val-148.

The protein belongs to the PurH family.

The catalysed reaction is (6R)-10-formyltetrahydrofolate + 5-amino-1-(5-phospho-beta-D-ribosyl)imidazole-4-carboxamide = 5-formamido-1-(5-phospho-D-ribosyl)imidazole-4-carboxamide + (6S)-5,6,7,8-tetrahydrofolate. The enzyme catalyses IMP + H2O = 5-formamido-1-(5-phospho-D-ribosyl)imidazole-4-carboxamide. The protein operates within purine metabolism; IMP biosynthesis via de novo pathway; 5-formamido-1-(5-phospho-D-ribosyl)imidazole-4-carboxamide from 5-amino-1-(5-phospho-D-ribosyl)imidazole-4-carboxamide (10-formyl THF route): step 1/1. Its pathway is purine metabolism; IMP biosynthesis via de novo pathway; IMP from 5-formamido-1-(5-phospho-D-ribosyl)imidazole-4-carboxamide: step 1/1. This is Bifunctional purine biosynthesis protein PurH from Serratia proteamaculans (strain 568).